Here is a 1427-residue protein sequence, read N- to C-terminus: DNA-directed RNA polymerase subunit beta' (1427 aa).

Cys70, Cys72, Cys85, and Cys88 together coordinate Zn(2+). Mg(2+)-binding residues include Asp461, Asp463, and Asp465. Zn(2+) is bound by residues Cys809, Cys882, Cys889, and Cys892. A disordered region spans residues 1394 to 1427 (EAAIGDDPLGKVQGEDFTTDDVMVEERPEGASEE). Residues 1417-1427 (VEERPEGASEE) are compositionally biased toward basic and acidic residues.

The protein belongs to the RNA polymerase beta' chain family. As to quaternary structure, the RNAP catalytic core consists of 2 alpha, 1 beta, 1 beta' and 1 omega subunit. When a sigma factor is associated with the core the holoenzyme is formed, which can initiate transcription. Requires Mg(2+) as cofactor. Zn(2+) serves as cofactor.

It catalyses the reaction RNA(n) + a ribonucleoside 5'-triphosphate = RNA(n+1) + diphosphate. Its function is as follows. DNA-dependent RNA polymerase catalyzes the transcription of DNA into RNA using the four ribonucleoside triphosphates as substrates. The protein is DNA-directed RNA polymerase subunit beta' of Sphingopyxis alaskensis (strain DSM 13593 / LMG 18877 / RB2256) (Sphingomonas alaskensis).